The following is a 252-amino-acid chain: Diphthine synthase (252 aa).

S-adenosyl-L-methionine is bound by residues Leu9, Asp85, Val88, 113–114 (SI), Leu165, Ala204, and His229.

The protein belongs to the diphthine synthase family. As to quaternary structure, homodimer.

It catalyses the reaction 2-[(3S)-amino-3-carboxypropyl]-L-histidyl-[translation elongation factor 2] + 3 S-adenosyl-L-methionine = diphthine-[translation elongation factor 2] + 3 S-adenosyl-L-homocysteine + 3 H(+). Its pathway is protein modification; peptidyl-diphthamide biosynthesis. Its function is as follows. S-adenosyl-L-methionine-dependent methyltransferase that catalyzes the trimethylation of the amino group of the modified target histidine residue in translation elongation factor 2 (EF-2), to form an intermediate called diphthine. The three successive methylation reactions represent the second step of diphthamide biosynthesis. This Methanocorpusculum labreanum (strain ATCC 43576 / DSM 4855 / Z) protein is Diphthine synthase.